A 613-amino-acid chain; its full sequence is tRNA 5-methylaminomethyl-2-thiouridine biosynthesis bifunctional protein MnmC (613 aa).

The segment at 1-225 (MKKAKLIFKD…KREMIKAYLE (225 aa)) is tRNA (mnm(5)s(2)U34)-methyltransferase. An FAD-dependent cmnm(5)s(2)U34 oxidoreductase region spans residues 252–613 (IGAGISSAVL…FLIRKLKKGL (362 aa)).

In the N-terminal section; belongs to the methyltransferase superfamily. tRNA (mnm(5)s(2)U34)-methyltransferase family. The protein in the C-terminal section; belongs to the DAO family. The cofactor is FAD.

Its subcellular location is the cytoplasm. The enzyme catalyses 5-aminomethyl-2-thiouridine(34) in tRNA + S-adenosyl-L-methionine = 5-methylaminomethyl-2-thiouridine(34) in tRNA + S-adenosyl-L-homocysteine + H(+). Catalyzes the last two steps in the biosynthesis of 5-methylaminomethyl-2-thiouridine (mnm(5)s(2)U) at the wobble position (U34) in tRNA. Catalyzes the FAD-dependent demodification of cmnm(5)s(2)U34 to nm(5)s(2)U34, followed by the transfer of a methyl group from S-adenosyl-L-methionine to nm(5)s(2)U34, to form mnm(5)s(2)U34. In Campylobacter jejuni subsp. jejuni serotype O:2 (strain ATCC 700819 / NCTC 11168), this protein is tRNA 5-methylaminomethyl-2-thiouridine biosynthesis bifunctional protein MnmC.